Here is a 434-residue protein sequence, read N- to C-terminus: Urokinase-type plasminogen activator (434 aa).

The signal sequence occupies residues 1–20; that stretch reads MKLIIFLTVTLCTLVTGLDS. The 37-residue stretch at 36-72 folds into the EGF-like domain; the sequence is QHRECQCLNGGTCITYRFFSQIKRCLCPEGYGGLHCE. 12 disulfides stabilise this stretch: Cys40/Cys48, Cys42/Cys60, Cys62/Cys71, Cys79/Cys158, Cys96/Cys139, Cys128/Cys152, Cys162/Cys296, Cys202/Cys218, Cys210/Cys285, Cys310/Cys379, Cys342/Cys358, and Cys369/Cys397. The Kringle domain occupies 79 to 158; sequence CYSGNGEDYR…ETPCSTIEKC (80 aa). The interval 159 to 172 is connecting peptide; the sequence is ERTCGQRSFSKYFK. A Peptidase S1 domain is found at 173–421; the sequence is IVGGSQAEVE…YLNWIDSNMN (249 aa). His217 functions as the Charge relay system in the catalytic mechanism. Asn228 carries an N-linked (GlcNAc...) asparagine glycan. Residue Asp272 is the Charge relay system of the active site. The active-site Charge relay system is the Ser373.

The protein belongs to the peptidase S1 family.

The protein localises to the secreted. It carries out the reaction Specific cleavage of Arg-|-Val bond in plasminogen to form plasmin.. In terms of biological role, specifically cleaves the zymogen plasminogen to form the active enzyme plasmin. The polypeptide is Urokinase-type plasminogen activator (PLAU) (Gallus gallus (Chicken)).